The primary structure comprises 73 residues: UPF0057 membrane protein At4g30650 (73 aa).

The next 2 membrane-spanning stretches (helical) occupy residues 4-24 (NMEV…GVCL) and 37-57 (LVLT…VIVF).

The protein belongs to the UPF0057 (PMP3) family.

It is found in the membrane. In Arabidopsis thaliana (Mouse-ear cress), this protein is UPF0057 membrane protein At4g30650.